The chain runs to 314 residues: uncharacterized protein (314 aa).

It to M.leprae ML0607.

This is an uncharacterized protein from Mycobacterium bovis (strain ATCC BAA-935 / AF2122/97).